Reading from the N-terminus, the 376-residue chain is E3 ubiquitin-protein ligase RNF133 (376 aa).

One can recognise a PA domain in the interval 65-167; the sequence is SSTLKRVAGV…LKGTEIFHLI (103 aa). The chain crosses the membrane as a helical span at residues 190 to 210; the sequence is YLVSFVIVTTATLAYFIFYHI. The segment at 256–297 adopts an RING-type; atypical zinc-finger fold; the sequence is CVICFERYKPNDIVRILTCKHFFHKNCIDPWILPHGTCPICK. The segment at 327-376 is disordered; that stretch reads ETLSPSEEETNNEVSPAGTSDKVIHVEENPTSQNNDIQPHSVVEDVHPSP. Positions 355–364 are enriched in polar residues; that stretch reads NPTSQNNDIQ.

Interacts with E3 ligase UBE2J1. Post-translationally, auto-ubiquitinated. Expression is testis-specific.

It is found in the endoplasmic reticulum membrane. The catalysed reaction is S-ubiquitinyl-[E2 ubiquitin-conjugating enzyme]-L-cysteine + [acceptor protein]-L-lysine = [E2 ubiquitin-conjugating enzyme]-L-cysteine + N(6)-ubiquitinyl-[acceptor protein]-L-lysine.. It participates in protein modification; protein ubiquitination. In terms of biological role, has E3 ubiquitin-protein ligase activity. Plays a role in male fecundity through the interaction with the E2 ubituitin-protein ligase UBE2J1. The chain is E3 ubiquitin-protein ligase RNF133 from Homo sapiens (Human).